Here is a 138-residue protein sequence, read N- to C-terminus: Small ribosomal subunit protein uS11c (138 aa).

This sequence belongs to the universal ribosomal protein uS11 family. In terms of assembly, part of the 30S ribosomal subunit.

The protein localises to the plastid. It is found in the chloroplast. The sequence is that of Small ribosomal subunit protein uS11c from Phaseolus vulgaris (Kidney bean).